The following is a 212-amino-acid chain: Large ribosomal subunit protein uL3 (212 aa).

A disordered region spans residues 119–147; sequence YQGNIKRWGQSRGPETHGSRYHRIPGSMG.

Belongs to the universal ribosomal protein uL3 family. Part of the 50S ribosomal subunit. Forms a cluster with proteins L14 and L19.

In terms of biological role, one of the primary rRNA binding proteins, it binds directly near the 3'-end of the 23S rRNA, where it nucleates assembly of the 50S subunit. The protein is Large ribosomal subunit protein uL3 of Lactobacillus acidophilus (strain ATCC 700396 / NCK56 / N2 / NCFM).